We begin with the raw amino-acid sequence, 376 residues long: MHAFLVILFMIVIGALIGGITNIIAIKMLFHPQRAYHIGKWRIPFTPGLVPKRREEIAYKIGNVIEEHLITESLIKEKISSLSAREAIESFITQQIQKLKKDNATLQNFAGYFGIDLAKTAEDKLSNLIDEKLAQYYQDHNQEPLKSLIPSELEVELDEKIEALTPLLCDRARIYLSSAKGEQDIYNMLDTFFAEKGKIIGLLQMFMTKENIAERIQMELIRLTNHPKAREIVAQLINNEYMTLKNKSLGGVVSPEQFNNIKEKFTPLILSYADISARVNQPIKDLAPSIVKYAEQHAATWTTNLIVEKAAEHLSSIMKQVNLSGIVEEQINSFDLDYIERLIIEIANKELKLIMLLGFLLGGIIGCLQGIIALFV.

The next 2 helical transmembrane spans lie at F4–I24 and L356–V376.

Belongs to the UPF0754 family.

It localises to the cell membrane. This Staphylococcus carnosus (strain TM300) protein is UPF0754 membrane protein Sca_1420.